A 67-amino-acid chain; its full sequence is DNA-directed RNA polymerase subunit omega (67 aa).

It belongs to the RNA polymerase subunit omega family. The RNAP catalytic core consists of 2 alpha, 1 beta, 1 beta' and 1 omega subunit. When a sigma factor is associated with the core the holoenzyme is formed, which can initiate transcription.

It catalyses the reaction RNA(n) + a ribonucleoside 5'-triphosphate = RNA(n+1) + diphosphate. Its function is as follows. Promotes RNA polymerase assembly. Latches the N- and C-terminal regions of the beta' subunit thereby facilitating its interaction with the beta and alpha subunits. The sequence is that of DNA-directed RNA polymerase subunit omega from Albidiferax ferrireducens (strain ATCC BAA-621 / DSM 15236 / T118) (Rhodoferax ferrireducens).